The following is a 370-amino-acid chain: Probable neutral protease 2 homolog ARB_03949 (370 aa).

The first 19 residues, 1 to 19 (MQLVAALAALGALVAPAVA), serve as a signal peptide directing secretion. Positions 20-188 (YPHAPMNETL…SIHSRALQKR (169 aa)) are excised as a propeptide. Cystine bridges form between C196–C267 and C274–C292. Residue H316 participates in Zn(2+) binding. The active site involves E317. Residues H320 and D331 each contribute to the Zn(2+) site.

Belongs to the peptidase M35 family. It depends on Zn(2+) as a cofactor.

It is found in the secreted. It carries out the reaction Preferential cleavage of bonds with hydrophobic residues in P1'. Also 3-Asn-|-Gln-4 and 8-Gly-|-Ser-9 bonds in insulin B chain.. In terms of biological role, probable secreted metalloprotease that shows high activities on basic nuclear substrates such as histone and protamine. May be involved in virulence. The polypeptide is Probable neutral protease 2 homolog ARB_03949 (Arthroderma benhamiae (strain ATCC MYA-4681 / CBS 112371) (Trichophyton mentagrophytes)).